A 141-amino-acid polypeptide reads, in one-letter code: Putative pre-16S rRNA nuclease (141 aa).

This sequence belongs to the YqgF nuclease family.

The protein localises to the cytoplasm. Functionally, could be a nuclease involved in processing of the 5'-end of pre-16S rRNA. The chain is Putative pre-16S rRNA nuclease from Aliivibrio salmonicida (strain LFI1238) (Vibrio salmonicida (strain LFI1238)).